We begin with the raw amino-acid sequence, 256 residues long: Undecaprenyl-diphosphatase (256 aa).

Transmembrane regions (helical) follow at residues 39-59, 77-97, 101-121, 135-155, 176-196, 206-226, and 233-253; these read PTDA…AVLV, RTVI…YMLF, FTGG…TGLM, ISTK…LPGV, LMVS…LDCL, LPGA…MDVL, and VSFS…TALP.

The protein belongs to the UppP family.

The protein resides in the cell membrane. The catalysed reaction is di-trans,octa-cis-undecaprenyl diphosphate + H2O = di-trans,octa-cis-undecaprenyl phosphate + phosphate + H(+). Functionally, catalyzes the dephosphorylation of undecaprenyl diphosphate (UPP). This Methanothrix thermoacetophila (strain DSM 6194 / JCM 14653 / NBRC 101360 / PT) (Methanosaeta thermophila) protein is Undecaprenyl-diphosphatase.